The sequence spans 521 residues: Aldehyde dehydrogenase, mitochondrial (521 aa).

The N-terminal 21 residues, 1 to 21 (MLRPAALAAARLVLRQGRRLL), are a transit peptide targeting the mitochondrion. The SIFI-degron signature appears at 13-28 (VLRQGRRLLSAAPTQA). An N6-acetyllysine mark is found at Lys-56, Lys-77, and Lys-163. 266 to 271 (GSTEVG) serves as a coordination point for NAD(+). The active-site Proton acceptor is Glu-289. The Nucleophile role is filled by Cys-323. Residues Lys-372, Lys-379, Lys-387, Lys-430, Lys-432, Lys-445, and Lys-455 each carry the N6-acetyllysine modification.

This sequence belongs to the aldehyde dehydrogenase family. As to quaternary structure, homotetramer. Post-translationally, in response to mitochondrial stress, the precursor protein is ubiquitinated by the SIFI complex in the cytoplasm before mitochondrial import, leading to its degradation. Within the SIFI complex, UBR4 initiates ubiquitin chain that are further elongated or branched by KCMF1.

It is found in the mitochondrion matrix. The catalysed reaction is an aldehyde + NAD(+) + H2O = a carboxylate + NADH + 2 H(+). Its pathway is alcohol metabolism; ethanol degradation; acetate from ethanol: step 2/2. Its function is as follows. Required for clearance of cellular formaldehyde, a cytotoxic and carcinogenic metabolite that induces DNA damage. In Sus scrofa (Pig), this protein is Aldehyde dehydrogenase, mitochondrial (ALDH2).